Consider the following 142-residue polypeptide: Large ribosomal subunit protein uL11 (142 aa).

The protein belongs to the universal ribosomal protein uL11 family. Part of the ribosomal stalk of the 50S ribosomal subunit. Interacts with L10 and the large rRNA to form the base of the stalk. L10 forms an elongated spine to which L12 dimers bind in a sequential fashion forming a multimeric L10(L12)X complex. Post-translationally, one or more lysine residues are methylated.

Forms part of the ribosomal stalk which helps the ribosome interact with GTP-bound translation factors. In Lachnoclostridium phytofermentans (strain ATCC 700394 / DSM 18823 / ISDg) (Clostridium phytofermentans), this protein is Large ribosomal subunit protein uL11.